Here is a 447-residue protein sequence, read N- to C-terminus: Glutamate--tRNA ligase 1 (447 aa).

The 'HIGH' region motif lies at 10–20 (PSPTGMLHVGN). The 'KMSKS' region motif lies at 240–244 (KISKR). An ATP-binding site is contributed by Lys-243.

The protein belongs to the class-I aminoacyl-tRNA synthetase family. Glutamate--tRNA ligase type 1 subfamily. Monomer.

It is found in the cytoplasm. The enzyme catalyses tRNA(Glu) + L-glutamate + ATP = L-glutamyl-tRNA(Glu) + AMP + diphosphate. Catalyzes the attachment of glutamate to tRNA(Glu) in a two-step reaction: glutamate is first activated by ATP to form Glu-AMP and then transferred to the acceptor end of tRNA(Glu). The polypeptide is Glutamate--tRNA ligase 1 (Rickettsia conorii (strain ATCC VR-613 / Malish 7)).